Reading from the N-terminus, the 94-residue chain is Mobilization protein C (94 aa).

In terms of assembly, interacts with MobA and MobB to form the relaxosome.

Functionally, this protein is essential to promote the specific transfer of the plasmid in the presence of conjugative plasmids. This is Mobilization protein C (mobC) from Escherichia coli.